Here is a 475-residue protein sequence, read N- to C-terminus: Putative F-box protein At1g46840 (475 aa).

The F-box domain occupies 25–71 (TYVLEKLHIDLVIEILSRLSAKSIAICRCVSKQWNSLLVSQDFVESF). Over residues 423–433 (SSYSTTRSYKS) the composition is skewed to low complexity. Residues 423-475 (SSYSTTRSYKSSGKRCSDRSIGEDEQDDIGEKRGDQAAERRERSTKRGKHEVH) form a disordered region. Basic and acidic residues predominate over residues 451-464 (IGEKRGDQAAERRE). Basic residues predominate over residues 465–475 (RSTKRGKHEVH).

The protein is Putative F-box protein At1g46840 of Arabidopsis thaliana (Mouse-ear cress).